A 425-amino-acid chain; its full sequence is Na(+)/H(+) antiporter NhaA 1 (425 aa).

The next 11 membrane-spanning stretches (helical) occupy residues 20–40 (AGGV…NSPL), 65–85 (PHLW…GLEI), 102–122 (LPFI…LAVT), 131–151 (GWAI…ALLG), 160–180 (LFLT…IALA), 183–203 (ASIK…MMAM), 218–238 (FVLL…AGVL), 272–292 (FLIV…GFSL), 303–323 (IAAG…WAAV), 342–362 (LSVL…LAFA), and 373–393 (LGVI…LRFA).

It belongs to the NhaA Na(+)/H(+) (TC 2.A.33) antiporter family.

The protein localises to the cell inner membrane. It catalyses the reaction Na(+)(in) + 2 H(+)(out) = Na(+)(out) + 2 H(+)(in). In terms of biological role, na(+)/H(+) antiporter that extrudes sodium in exchange for external protons. The protein is Na(+)/H(+) antiporter NhaA 1 of Novosphingobium aromaticivorans (strain ATCC 700278 / DSM 12444 / CCUG 56034 / CIP 105152 / NBRC 16084 / F199).